Here is a 511-residue protein sequence, read N- to C-terminus: Histidine ammonia-lyase (511 aa).

Positions 142–144 (ASG) form a cross-link, 5-imidazolinone (Ala-Gly). Ser-143 carries the 2,3-didehydroalanine (Ser) modification.

Belongs to the PAL/histidase family. Contains an active site 4-methylidene-imidazol-5-one (MIO), which is formed autocatalytically by cyclization and dehydration of residues Ala-Ser-Gly.

Its subcellular location is the cytoplasm. It carries out the reaction L-histidine = trans-urocanate + NH4(+). Its pathway is amino-acid degradation; L-histidine degradation into L-glutamate; N-formimidoyl-L-glutamate from L-histidine: step 1/3. This is Histidine ammonia-lyase from Brucella ovis (strain ATCC 25840 / 63/290 / NCTC 10512).